The sequence spans 872 residues: Alanine--tRNA ligase (872 aa).

Residues histidine 566, histidine 570, cysteine 668, and histidine 672 each coordinate Zn(2+).

Belongs to the class-II aminoacyl-tRNA synthetase family. It depends on Zn(2+) as a cofactor.

The protein resides in the cytoplasm. The enzyme catalyses tRNA(Ala) + L-alanine + ATP = L-alanyl-tRNA(Ala) + AMP + diphosphate. In terms of biological role, catalyzes the attachment of alanine to tRNA(Ala) in a two-step reaction: alanine is first activated by ATP to form Ala-AMP and then transferred to the acceptor end of tRNA(Ala). Also edits incorrectly charged Ser-tRNA(Ala) and Gly-tRNA(Ala) via its editing domain. The polypeptide is Alanine--tRNA ligase (Lactococcus lactis subsp. cremoris (strain SK11)).